Reading from the N-terminus, the 152-residue chain is UPF0178 protein Bcer98_3021 (152 aa).

Belongs to the UPF0178 family.

The sequence is that of UPF0178 protein Bcer98_3021 from Bacillus cytotoxicus (strain DSM 22905 / CIP 110041 / 391-98 / NVH 391-98).